A 48-amino-acid polypeptide reads, in one-letter code: Large ribosomal subunit protein eL40 (48 aa).

It belongs to the eukaryotic ribosomal protein eL40 family.

In Methanosphaera stadtmanae (strain ATCC 43021 / DSM 3091 / JCM 11832 / MCB-3), this protein is Large ribosomal subunit protein eL40.